The following is a 334-amino-acid chain: Siroheme decarboxylase (334 aa).

Histidine 93 is an active-site residue.

The protein belongs to the Ahb/Nir family.

The enzyme catalyses siroheme + 2 H(+) = 12,18-didecarboxysiroheme + 2 CO2. Its pathway is porphyrin-containing compound metabolism. In terms of biological role, involved in heme d1 biosynthesis. Catalyzes the decarboxylation of siroheme into didecarboxysiroheme. Siroheme is probably decarboxylated to monodecarboxysiroheme, which is in turn decarboxylated to didecarboxysiroheme. This Hydrogenobacter thermophilus (strain DSM 6534 / IAM 12695 / TK-6) protein is Siroheme decarboxylase.